The primary structure comprises 131 residues: Small ribosomal subunit protein uS8 (131 aa).

Belongs to the universal ribosomal protein uS8 family. In terms of assembly, part of the 30S ribosomal subunit. Contacts proteins S5 and S12.

In terms of biological role, one of the primary rRNA binding proteins, it binds directly to 16S rRNA central domain where it helps coordinate assembly of the platform of the 30S subunit. The sequence is that of Small ribosomal subunit protein uS8 from Wolbachia pipientis subsp. Culex pipiens (strain wPip).